We begin with the raw amino-acid sequence, 199 residues long: Inactive glutathione S-transferase D3 (199 aa).

In terms of domain architecture, GST N-terminal spans 1-64; that stretch reads MVGKALGLEF…YLVEKYGKDD (64 aa). Glutathione-binding positions include 34-36 and 48-50; these read HSI and ESR. Residues 70–199 enclose the GST C-terminal domain; sequence DIQKQAVINQ…RIEEKQNAAK (130 aa).

This sequence belongs to the GST superfamily. Delta family. In terms of assembly, homodimer.

Has no glutathione S-transferase activity. This chain is Inactive glutathione S-transferase D3, found in Drosophila melanogaster (Fruit fly).